The following is a 195-amino-acid chain: Calcineurin B homologous protein 1 (195 aa).

Gly2 carries the N-myristoyl glycine lipid modification. The Necessary for association with microtubule and interaction with GAPDH motif lies at 2–6 (GSRAS). EF-hand domains lie at 26 to 61 (SQITRLYSRFTSLDKGENGTLSREDFQRIPELAINP), 71 to 106 (FSEGEDQVNFRGFMRTLAHFRPIEDNEKSKDVNGPE), 110 to 145 (SRSNKLHFAFRLYDLDKDDKISRDELLQVLRMMVGV), and 151 to 186 (QLGSIADRTIQEADQDGDSAISFTEFVKVLEKVDVE). Ca(2+)-binding residues include Asp123, Asp125, Asp127, Lys129, and Glu134. Positions 138-147 (VLRMMVGVNI) match the Nuclear export signal 1 motif. Positions 164, 166, 168, and 175 each coordinate Ca(2+). The Nuclear export signal 2 signature appears at 176–185 (FVKVLEKVDV).

Belongs to the calcineurin regulatory subunit family. CHP subfamily. Monomer. Interacts with STK17B; the interaction occurs in a calcium-independent manner and induces the translocation of CHP1 from the Golgi to the nucleus. Interacts with GAPDH; the interaction is direct, occurs in a N-myristoylation-dependent manner and facilitates the ability of CHP1 to bind microtubules. Interacts with KIF1B (via the C-terminal end of the kinesin-motor domain); the interaction occurs in a calcium-dependent manner. Associates (via C-terminal domain) with microtubules; the association occurs with polymerized microtubules during the cell cycle in a myristoylation- and calcium-independent manner and is enhanced by GAPDH. Interacts with PPP3CA. Interacts with SLC9A1/NHE1 (via the cytoplasmic C-terminal domain); the interaction occurs at the plasma membrane in a calcium-dependent manner and at a domain that is critical for growth factor stimulation of the exchanger. Interacts with SLC9A3; increases SLC9A3 trafficking and activity at the plasma membrane. Phosphorylated; decreased phosphorylation is associated with an increase in SLC9A1/NHE1 Na(+)/H(+) exchange activity. Phosphorylation occurs in serum-dependent manner. The phosphorylation state may regulate the binding to SLC9A1/NHE1. In terms of processing, both N-myristoylation and calcium-mediated conformational changes are essential for its function in exocytic traffic. N-myristoylation is required for its association with microtubules and interaction with GAPDH, but not for the constitutive association to membranes.

It localises to the nucleus. The protein resides in the cytoplasm. It is found in the cytoskeleton. The protein localises to the endomembrane system. Its subcellular location is the endoplasmic reticulum-Golgi intermediate compartment. It localises to the endoplasmic reticulum. The protein resides in the cell membrane. It is found in the membrane. In terms of biological role, calcium-binding protein involved in different processes such as regulation of vesicular trafficking, plasma membrane Na(+)/H(+) exchanger and gene transcription. Involved in the constitutive exocytic membrane traffic. Mediates the association between microtubules and membrane-bound organelles of the endoplasmic reticulum and Golgi apparatus and is also required for the targeting and fusion of transcytotic vesicles (TCV) with the plasma membrane. Functions as an integral cofactor in cell pH regulation by controlling plasma membrane-type Na(+)/H(+) exchange activity. Affects the pH sensitivity of SLC9A1/NHE1 by increasing its sensitivity at acidic pH. Required for the stabilization and localization of SLC9A1/NHE1 at the plasma membranes. Inhibits serum- and GTPase-stimulated Na(+)/H(+) exchange. Plays a role as an inhibitor of ribosomal RNA transcription by repressing the nucleolar UBF1 transcriptional activity. May sequester UBF1 in the nucleoplasm and limit its translocation to the nucleolus. Associates to the ribosomal gene promoter. Acts as a negative regulator of the calcineurin/NFAT signaling pathway. Inhibits NFAT nuclear translocation and transcriptional activity by suppressing the calcium-dependent calcineurin phosphatase activity. Also negatively regulates the kinase activity of the apoptosis-induced kinase STK17B. Inhibits both STK17B auto- and substrate-phosphorylations in a calcium-dependent manner. The chain is Calcineurin B homologous protein 1 (Chp1) from Mus musculus (Mouse).